The sequence spans 386 residues: Succinate--CoA ligase [ADP-forming] subunit beta (386 aa).

An ATP-grasp domain is found at 9-244 (KEVLRKYGVV…LDEEDADEIE (236 aa)). ATP contacts are provided by residues Lys46, 53-55 (GRG), Glu99, Ala102, and Glu107. Asn199 and Asp213 together coordinate Mg(2+). Residues Asn264 and 321–323 (GIM) each bind substrate.

It belongs to the succinate/malate CoA ligase beta subunit family. In terms of assembly, heterotetramer of two alpha and two beta subunits. The cofactor is Mg(2+).

The enzyme catalyses succinate + ATP + CoA = succinyl-CoA + ADP + phosphate. The catalysed reaction is GTP + succinate + CoA = succinyl-CoA + GDP + phosphate. It participates in carbohydrate metabolism; tricarboxylic acid cycle; succinate from succinyl-CoA (ligase route): step 1/1. Functionally, succinyl-CoA synthetase functions in the citric acid cycle (TCA), coupling the hydrolysis of succinyl-CoA to the synthesis of either ATP or GTP and thus represents the only step of substrate-level phosphorylation in the TCA. The beta subunit provides nucleotide specificity of the enzyme and binds the substrate succinate, while the binding sites for coenzyme A and phosphate are found in the alpha subunit. In Azoarcus sp. (strain BH72), this protein is Succinate--CoA ligase [ADP-forming] subunit beta.